Reading from the N-terminus, the 157-residue chain is Phosphopantetheine adenylyltransferase (157 aa).

Substrate is bound at residue Thr-8. Residues 8-9 and His-16 contribute to the ATP site; that span reads TF. Positions 40, 72, and 86 each coordinate substrate. ATP-binding positions include 87–89, Glu-97, and 122–128; these read GLR and YSFLSSS.

It belongs to the bacterial CoaD family. Homohexamer. Mg(2+) is required as a cofactor.

The protein resides in the cytoplasm. It carries out the reaction (R)-4'-phosphopantetheine + ATP + H(+) = 3'-dephospho-CoA + diphosphate. Its pathway is cofactor biosynthesis; coenzyme A biosynthesis; CoA from (R)-pantothenate: step 4/5. Reversibly transfers an adenylyl group from ATP to 4'-phosphopantetheine, yielding dephospho-CoA (dPCoA) and pyrophosphate. The polypeptide is Phosphopantetheine adenylyltransferase (Prochlorococcus marinus (strain AS9601)).